The sequence spans 144 residues: Probable low molecular weight protein-tyrosine-phosphatase AmsI (144 aa).

The Nucleophile role is filled by C9. Residue R15 is part of the active site. D115 serves as the catalytic Proton donor.

The protein belongs to the low molecular weight phosphotyrosine protein phosphatase family.

The catalysed reaction is O-phospho-L-tyrosyl-[protein] + H2O = L-tyrosyl-[protein] + phosphate. May function as a phosphatase required for amylovoran (an exopolysaccharide that functions as a virulence factor) production. The polypeptide is Probable low molecular weight protein-tyrosine-phosphatase AmsI (amsI) (Erwinia amylovora (Fire blight bacteria)).